Here is a 255-residue protein sequence, read N- to C-terminus: 4-diphosphocytidyl-2-C-methyl-D-erythritol kinase (255 aa).

Lysine 6 is an active-site residue. 95-105 is an ATP binding site; it reads PVCAGLGGGSS. Aspartate 137 is an active-site residue.

The protein belongs to the GHMP kinase family. IspE subfamily.

It carries out the reaction 4-CDP-2-C-methyl-D-erythritol + ATP = 4-CDP-2-C-methyl-D-erythritol 2-phosphate + ADP + H(+). It participates in isoprenoid biosynthesis; isopentenyl diphosphate biosynthesis via DXP pathway; isopentenyl diphosphate from 1-deoxy-D-xylulose 5-phosphate: step 3/6. Its function is as follows. Catalyzes the phosphorylation of the position 2 hydroxy group of 4-diphosphocytidyl-2C-methyl-D-erythritol. In Campylobacter jejuni subsp. jejuni serotype O:2 (strain ATCC 700819 / NCTC 11168), this protein is 4-diphosphocytidyl-2-C-methyl-D-erythritol kinase.